We begin with the raw amino-acid sequence, 154 residues long: Histone H2B.v3 (154 aa).

Residues 1–11 show a composition bias toward basic residues; sequence MVFVKGQKKAT. Residues 1-48 are disordered; it reads MVFVKGQKKATKGSTQSGEEKTASTTPKVTKTPTEGGEKKRKKRKSDY. The segment covering 12–27 has biased composition (polar residues); the sequence is KGSTQSGEEKTASTTP.

The protein belongs to the histone H2B family. As to quaternary structure, the nucleosome is a histone octamer containing two molecules each of H2A, H2B, H3 and H4 assembled in one H3-H4 heterotetramer and two H2A-H2B heterodimers. The octamer wraps approximately 147 bp of DNA.

The protein localises to the nucleus. It localises to the chromosome. Functionally, core component of nucleosome which plays a central role in DNA double strand break (DSB) repair. Nucleosomes wrap and compact DNA into chromatin, limiting DNA accessibility to the cellular machineries which require DNA as a template. Histones thereby play a central role in transcription regulation, DNA repair, DNA replication and chromosomal stability. DNA accessibility is regulated via a complex set of post-translational modifications of histones, also called histone code, and nucleosome remodeling. The sequence is that of Histone H2B.v3 (H2Bv3) from Dictyostelium discoideum (Social amoeba).